The sequence spans 360 residues: Mitogen-activated protein kinase 1 (360 aa).

N-acetylalanine is present on Ala2. In terms of domain architecture, Protein kinase spans 25 to 313 (YTNLSYIGEG…VEQALAHPYL (289 aa)). Position 29 is a phosphoserine; by SGK1 (Ser29). Residues 31-39 (IGEGAYGMV) and Lys54 each bind ATP. Catalysis depends on Asp149, which acts as the Proton acceptor. Thr185 carries the post-translational modification Phosphothreonine; by MAP2K1 and MAP2K2. The TXY motif lies at 185–187 (TEY). Phosphotyrosine; by MAP2K1 and MAP2K2 is present on Tyr187. Position 190 is a phosphothreonine; by autocatalysis (Thr190). Phosphoserine occurs at positions 246, 248, and 284.

The protein belongs to the protein kinase superfamily. CMGC Ser/Thr protein kinase family. MAP kinase subfamily. Binds both upstream activators and downstream substrates in multimolecular complexes. Interacts with ADAM15, ARHGEF2, ARRB2, DAPK1 (via death domain), HSF4, IER3, IPO7, MKNK2, MORG1, NISCH, PEA15, SGK1, and isoform 1 of NEK2. Interacts (via phosphorylated form) with TPR (via C-terminal region and phosphorylated form); the interaction requires dimerization of MAPK1/ERK2 and increases following EGF stimulation. Interacts with MAP2K1. Interacts with DUSP6. Interacts (phosphorylated form) with CAV2 ('Tyr-19'-phosphorylated form); the interaction, promoted by insulin, leads to nuclear location and MAPK1 activation. MKNK2 isoform 1 binding prevents from dephosphorylation and inactivation. Interacts with DCC. The phosphorylated form interacts with PML. Interacts with STYX. Interacts with CDK2AP2. Interacts with CAVIN4. Interacts with DUSP7; the interaction enhances DUSP7 phosphatase activity. Interacts with GIT1; this interaction is necessary for MAPK1 localization to focal adhesions. Interacts with ZNF263. Interacts with phosphoglycerate kinase PGK1; the interaction is direct, occurs under hypoxic conditions, and promotes interaction between PGK1 and PIN1. The cofactor is Mg(2+). In terms of processing, dually phosphorylated on Thr-185 and Tyr-187, which activates the enzyme. Phosphorylated upon FLT3 and KIT signaling. Phosphorylation on Ser-29 by SGK1 results in its activation by enhancing its interaction with MAP2K1/MEK1 and MAP2K2/MEK2. Phosphorylation at Ser-246 and Ser-248 as well as autophosphorylation at Thr-190 promote nuclear localization. Ligand-activated ALK induces tyrosine phosphorylation. Dephosphorylated by PTPRJ at Tyr-187. Dephosphorylated by DUSP1 and DUSP2 at Thr-185 and Tyr-187. ISGylated. Post-translationally, ubiquitinated by TRIM15 via 'Lys-63'-linked ubiquitination; leading to activation. Deubiquitinated by CYLD.

The protein resides in the nucleus. Its subcellular location is the cytoplasm. The protein localises to the cytoskeleton. It localises to the microtubule organizing center. It is found in the centrosome. The protein resides in the spindle. Its subcellular location is the membrane. The protein localises to the caveola. It localises to the cell junction. It is found in the focal adhesion. It catalyses the reaction L-seryl-[protein] + ATP = O-phospho-L-seryl-[protein] + ADP + H(+). The catalysed reaction is L-threonyl-[protein] + ATP = O-phospho-L-threonyl-[protein] + ADP + H(+). Phosphorylated by MAP2K1/MEK1 and MAP2K2/MEK2 on Thr-185 and Tyr-187 in response to external stimuli like insulin or NGF. Both phosphorylations are required for activity. This phosphorylation causes dramatic conformational changes, which enable full activation and interaction of MAPK1/ERK2 with its substrates. Phosphorylation on Ser-29 by SGK1 results in its activation by enhancing its interaction with MAP2K1/MEK1 and MAP2K2/MEK2. Dephosphorylated and inactivated by DUSP1, DUSP3, DUSP6 and DUSP9. Inactivated by pyrimidylpyrrole inhibitors. In terms of biological role, serine/threonine kinase which acts as an essential component of the MAP kinase signal transduction pathway. MAPK1/ERK2 and MAPK3/ERK1 are the 2 MAPKs which play an important role in the MAPK/ERK cascade. They participate also in a signaling cascade initiated by activated KIT and KITLG/SCF. Depending on the cellular context, the MAPK/ERK cascade mediates diverse biological functions such as cell growth, adhesion, survival and differentiation through the regulation of transcription, translation, cytoskeletal rearrangements. The MAPK/ERK cascade also plays a role in initiation and regulation of meiosis, mitosis, and postmitotic functions in differentiated cells by phosphorylating a number of transcription factors. About 160 substrates have already been discovered for ERKs. Many of these substrates are localized in the nucleus, and seem to participate in the regulation of transcription upon stimulation. However, other substrates are found in the cytosol as well as in other cellular organelles, and those are responsible for processes such as translation, mitosis and apoptosis. Moreover, the MAPK/ERK cascade is also involved in the regulation of the endosomal dynamics, including lysosome processing and endosome cycling through the perinuclear recycling compartment (PNRC); as well as in the fragmentation of the Golgi apparatus during mitosis. The substrates include transcription factors (such as ATF2, BCL6, ELK1, ERF, FOS, HSF4 or SPZ1), cytoskeletal elements (such as CANX, CTTN, GJA1, MAP2, MAPT, PXN, SORBS3 or STMN1), regulators of apoptosis (such as BAD, BTG2, CASP9, DAPK1, IER3, MCL1 or PPARG), regulators of translation (such as EIF4EBP1 and FXR1) and a variety of other signaling-related molecules (like ARHGEF2, DCC, FRS2 or GRB10). Protein kinases (such as RAF1, RPS6KA1/RSK1, RPS6KA3/RSK2, RPS6KA2/RSK3, RPS6KA6/RSK4, SYK, MKNK1/MNK1, MKNK2/MNK2, RPS6KA5/MSK1, RPS6KA4/MSK2, MAPKAPK3 or MAPKAPK5) and phosphatases (such as DUSP1, DUSP4, DUSP6 or DUSP16) are other substrates which enable the propagation the MAPK/ERK signal to additional cytosolic and nuclear targets, thereby extending the specificity of the cascade. Mediates phosphorylation of TPR in response to EGF stimulation. May play a role in the spindle assembly checkpoint. Phosphorylates PML and promotes its interaction with PIN1, leading to PML degradation. Phosphorylates CDK2AP2. Phosphorylates phosphoglycerate kinase PGK1 under hypoxic conditions to promote its targeting to the mitochondrion and suppress the formation of acetyl-coenzyme A from pyruvate. Its function is as follows. Acts as a transcriptional repressor. Binds to a [GC]AAA[GC] consensus sequence. Repress the expression of interferon gamma-induced genes. Seems to bind to the promoter of CCL5, DMP1, IFIH1, IFITM1, IRF7, IRF9, LAMP3, OAS1, OAS2, OAS3 and STAT1. Transcriptional activity is independent of kinase activity. The polypeptide is Mitogen-activated protein kinase 1 (Bos taurus (Bovine)).